Reading from the N-terminus, the 216-residue chain is 2-phospho-L-lactate guanylyltransferase (216 aa).

The protein belongs to the CofC family. Homodimer.

It carries out the reaction (2S)-2-phospholactate + GTP + H(+) = (2S)-lactyl-2-diphospho-5'-guanosine + diphosphate. The protein operates within cofactor biosynthesis; coenzyme F420 biosynthesis. Guanylyltransferase that catalyzes the activation of (2S)-2-phospholactate (2-PL) as (2S)-lactyl-2-diphospho-5'-guanosine, via the condensation of 2-PL with GTP. It is involved in the biosynthesis of coenzyme F420, a hydride carrier cofactor. The polypeptide is 2-phospho-L-lactate guanylyltransferase (Methanocaldococcus infernus (strain DSM 11812 / JCM 15783 / ME)).